A 215-amino-acid polypeptide reads, in one-letter code: MSCTIEKALADAKALVERLRDHDDAAESLIEQTTALNKRVEAMKQYQEEIQELNEVARHRPRSTLVMGIQQENRQIRELQQENKELRTSLEEHQSALELIMSKYREQMFRLLMASKKDDPGIIMKLKEQHSKELQAHVDQITEMAAVMRKAIEIDEQQGCKEQERIFQLEQENKGLREILQITRESFLNLRKDDASESTSLSALVTNSDLSLRKN.

2 coiled-coil regions span residues 5–104 and 161–185; these read IEKA…MSKY and KEQE…ITRE. The interval 194–215 is disordered; the sequence is DASESTSLSALVTNSDLSLRKN. A compositionally biased stretch (polar residues) spans 197–215; the sequence is ESTSLSALVTNSDLSLRKN.

The protein belongs to the SIKE family.

Its subcellular location is the cytoplasm. Its function is as follows. May be involved in wound healing pathway. This Pongo abelii (Sumatran orangutan) protein is FGFR1 oncogene partner 2 homolog (FGFR1OP2).